We begin with the raw amino-acid sequence, 269 residues long: MSHGGGGHAAELFPENQVLVIGAVLSLIGMYIAHFVPSLAMLLGGLLAAGACVAGANTTRRVAAYGLGTGVPSIGMVSLGMGTISALAGVLIPSVLAGSVALPFDLVLATPIIAAVVAIIVGFIVGKLTQNPVGMKVPIIVSSMTKLSLMGALAILGFCTAFAGGFSADLIINGAINNGIIALAFIAAGMSILHPFNACIGPNESHKRTITLATACGLMAWLVFSIAKLDIVSILVAAVFWIYTYGSFVSMSLADACEVKYVPELPKKE.

The next 8 membrane-spanning stretches (helical) occupy residues 18-38 (VLVI…FVPS), 39-59 (LAML…ANTT), 62-82 (VAAY…LGMG), 84-104 (ISAL…ALPF), 106-126 (LVLA…FIVG), 152-172 (ALAI…DLII), 180-200 (IIAL…NACI), and 222-242 (LVFS…VFWI).

This sequence belongs to the MtrC family. The complex is composed of 8 subunits; MtrA, MtrB, MtrC, MtrD, MtrE, MtrF, MtrG and MtrH.

It localises to the cell membrane. It carries out the reaction 5-methyl-5,6,7,8-tetrahydromethanopterin + coenzyme M + 2 Na(+)(in) = 5,6,7,8-tetrahydromethanopterin + methyl-coenzyme M + 2 Na(+)(out). It functions in the pathway one-carbon metabolism; methanogenesis from CO(2); methyl-coenzyme M from 5,10-methylene-5,6,7,8-tetrahydromethanopterin: step 2/2. Functionally, part of a complex that catalyzes the formation of methyl-coenzyme M and tetrahydromethanopterin from coenzyme M and methyl-tetrahydromethanopterin. This is an energy-conserving, sodium-ion translocating step. This Methanococcus vannielii (strain ATCC 35089 / DSM 1224 / JCM 13029 / OCM 148 / SB) protein is Tetrahydromethanopterin S-methyltransferase subunit C.